A 174-amino-acid polypeptide reads, in one-letter code: MKILITGRPGSGKSTMVGRLRDYLEGMGFSVGGIITPEVRVGGSRWGFEVVDIASGRRGLLASVETEGPRIGRYGVNVGVMDELAVPAIRRAMLEDDCIIIDEIGPMELKSREFRRTVDEVLSSDVLLIAAVHRKTLQSIKKREDIRVFVVDPEKRDRVYLRIIDLLGDYHGMR.

ATP-binding positions include 7–14 and 98–105; these read GRPGSGKS and CIIIDEIG.

This sequence belongs to the THEP1 NTPase family.

It carries out the reaction a ribonucleoside 5'-triphosphate + H2O = a ribonucleoside 5'-diphosphate + phosphate + H(+). In terms of biological role, has nucleotide phosphatase activity towards ATP, GTP, CTP, TTP and UTP. May hydrolyze nucleoside diphosphates with lower efficiency. The polypeptide is Nucleoside-triphosphatase THEP1 (Methanothermobacter thermautotrophicus (strain ATCC 29096 / DSM 1053 / JCM 10044 / NBRC 100330 / Delta H) (Methanobacterium thermoautotrophicum)).